Here is a 427-residue protein sequence, read N- to C-terminus: Homoserine O-acetyltransferase FUB5 (427 aa).

Residues 1-13 (MTTTTTAPALPTP) show a composition bias toward low complexity. Residues 1–35 (MTTTTTAPALPTPIHDGLGNGTTYERSIPRPVNPF) form a disordered region. Residues 77–400 (NVMIICHALS…VSDDGHDAFL (324 aa)) enclose the AB hydrolase-1 domain. Residue S175 is the Nucleophile of the active site. Residues 260–297 (RFGRDTGNKKKAKNKGSETLPSNSTPIHSQGGADETPV) form a disordered region. Polar residues predominate over residues 276-287 (SETLPSNSTPIH). Catalysis depends on residues D367 and H396.

This sequence belongs to the AB hydrolase superfamily. MetX family.

The enzyme catalyses L-homoserine + acetyl-CoA = O-acetyl-L-homoserine + CoA. It functions in the pathway mycotoxin biosynthesis. Its function is as follows. Homoserine O-acetyltransferase; part of the gene cluster that mediates the biosynthesis of fusaric acid, a mycotoxin with low to moderate toxicity to animals and humans, but with high phytotoxic properties. L-aspartate is suggested as fusaric acid amino acid precursor that is activated and further processed to O-acetyl-L-homoserine by cluster enzymes aspartate kinase FUB3 and homoserine O-acetyltransferase FUB5, as well as enzymes of the primary metabolism. The polyketide synthase (PKS) FUB1 generates the triketide trans-2-hexenal which is presumptively released by the hydrolase FUB4 and linked to the NRPS-bound amino acid precursor by NAD(P)-dependent dehydrogenase FUB6. FUB1, FUB4, and the non-canonical NRPS Fub8 may form an enzyme complex. Further processing of the NRPS-bound intermediate might be carried out by FUB6 and the sulfhydrylase FUB7, enabling a spontaneous electrocyclization to close the carbon backbone of fusaric acid. Dihydrofusaric acid is likely to be released via reduction by the thioester reductase (TR) domain of FUB8 whereupon the final oxidation to fusaric acid may (also) be performed by the FMN-dependent dehydrogenase FUB9. The sequence is that of Homoserine O-acetyltransferase FUB5 from Gibberella fujikuroi (strain CBS 195.34 / IMI 58289 / NRRL A-6831) (Bakanae and foot rot disease fungus).